Consider the following 3814-residue polypeptide: Hybrid PKS-NRPS synthetase pyvA (3814 aa).

A Ketosynthase family 3 (KS3) domain is found at 1–340; sequence MDPQQRLLLE…GSNAHVILES (340 aa). Active-site for beta-ketoacyl synthase activity residues include Cys-87, His-222, and His-261. Residues 441 to 758 are malonyl-CoA:ACP transacylase (MAT) domain; that stretch reads VFTGQGAQWH…PYFASLSRGV (318 aa). Ser-533 functions as the For malonyltransferase activity in the catalytic mechanism. An N-terminal hotdog fold region spans residues 835 to 970; the sequence is HPILGAKMPG…GLISISTATT (136 aa). Positions 835-1149 are dehydratase (DH) domain; sequence HPILGAKMPG…LRLTSLSNGR (315 aa). The PKS/mFAS DH domain occupies 835–1151; that stretch reads HPILGAKMPG…LTSLSNGRAA (317 aa). His-867 acts as the Proton acceptor; for dehydratase activity in catalysis. Residues 970 to 993 form a disordered region; that stretch reads TADGAPSRKPYRQHPQPQPGRMST. Positions 991–1151 are C-terminal hotdog fold; that stretch reads MSTASFPAQS…LTSLSNGRAA (161 aa). The active-site Proton donor; for dehydratase activity is Asp-1057. The segment at 1520–1836 is enoyl reductase (ER) domain; the sequence is GLLETLVWED…MGRHTGKVVL (317 aa). A ketoreductase (KR) domain region spans residues 1864 to 2036; sequence TYLLVGGLGG…PASSMNCGRI (173 aa). A Carrier 1 domain is found at 2141–2220; the sequence is IDLSDRVALL…ALVEKAIGLF (80 aa). Residue Ser-2180 is modified to O-(pantetheine 4'-phosphoryl)serine. Residues 2228–2238 are compositionally biased toward low complexity; sequence QQQQQSVQSSS. Positions 2228-2270 are disordered; sequence QQQQQSVQSSSAPSNDDQSPTFNKNLDSQDPSTSLQIPKADCS. Residues 2239 to 2263 are compositionally biased toward polar residues; it reads APSNDDQSPTFNKNLDSQDPSTSLQ. The tract at residues 2273–2718 is condensation (C) domain 7; it reads LPMSTFQNRL…PEVRLAGTLE (446 aa). Positions 2738 to 3149 are adenylation (A) domain 8; the sequence is PLNLPRRIVE…DGQLEFLGRI (412 aa). The tract at residues 3257–3304 is disordered; it reads SGKTDRRALGASQAPGTPPQHGAGPAAASTLDPAQAQAQDRADEEVGD. In terms of domain architecture, Carrier 2 spans 3304-3379; sequence DRTMATVTRV…QLVELVHSKV (76 aa). Ser-3339 is subject to O-(pantetheine 4'-phosphoryl)serine. The tract at residues 3428-3680 is thioesterase (TE) domain; that stretch reads MTGAESFTGI…VDLVPVNYLT (253 aa).

This sequence in the C-terminal section; belongs to the NRP synthetase family.

It functions in the pathway secondary metabolite biosynthesis. Hybrid PKS-NRPS synthetase; part of the gene cluster that mediates the biosynthesis of pyranoviolin A, a pyranonigrin analog with a C-3 methoxy group. Initially, the PKS portion of pyvA synthesizes C-10 carbon chain from 5 molecules of malonyl-CoA, which is then condensed with the thiolation (T) domain-bound glycine activated by the adenylation (A) domain. The subsequent chain release by Dieckmann condensation (DKC) could be catalyzed by the TE domain present at the C-terminus of pyvA and/or the alpha/beta hydrolase pyvD, installing the tetramic acid moiety. The FAD-dependent monooxygenase pyvC next epoxidizes one of the olefins of the polyketide part, and the epoxide ring-opening induces the dihydro-gamma-pyrone ring formation. The cytochrome P450 monooxygeanse pyvB would be responsible for the 2 consecutive reactions, in which the dihydro-gamma-pyrone is oxidized to gamma-pyrone and C-7 is hydroxylated to yield pyranonigrin F. Finally, the O-methyltransferase pyvH methylates the C-3 hydroxy group to complete the biosynthesis. This chain is Hybrid PKS-NRPS synthetase pyvA, found in Aspergillus violaceofuscus (strain CBS 115571).